Consider the following 393-residue polypeptide: UDP-sulfoquinovose synthase (393 aa).

NAD(+) is bound by residues 31–35 (DNLST), 74–75 (DI), R100, and N118. Position 100 (R100) interacts with substrate. Substrate is bound by residues T144 and Y182. The active site involves T144. NAD(+)-binding residues include Y182 and K186. The active-site Proton acceptor is Y182. K186 is an active-site residue. Q209 provides a ligand contact to substrate. V212 lines the NAD(+) pocket. Residues 238-241 (VVNR), 253-255 (TVY), and 326-328 (RVE) contribute to the substrate site.

The protein belongs to the NAD(P)-dependent epimerase/dehydratase family. It depends on NAD(+) as a cofactor.

The catalysed reaction is sulfite + UDP-alpha-D-glucose + H(+) = UDP-alpha-D-6-sulfoquinovose + H2O. Functionally, catalyzes the biosynthesis of UDP-sulfoquinovose by the transfer of sulfite to UDP-glucose. Important for the assembly of the S-layer N-glycans. The reaction probably occurs through an NAD(+)-dependent oxidation/dehydration/enolization/sulfite addition process. In vitro, in the absence of sulfite, UDP-D-glucose is converted via UDP-4-keto-D-glucose to UDP-D-glucose-5,6-ene. The protein is UDP-sulfoquinovose synthase of Sulfolobus acidocaldarius (strain ATCC 33909 / DSM 639 / JCM 8929 / NBRC 15157 / NCIMB 11770).